The sequence spans 516 residues: ADP-ribosylation factor GTPase-activating protein 3 (516 aa).

One can recognise an Arf-GAP domain in the interval 10-126 (LTIFKRLRSV…IKSLASQATR (117 aa)). A C4-type zinc finger spans residues 25-48 (CFDCGAKNPSWASITYGVFLCIDC). The segment at 170–199 (AEPSSLTSRPAETTLENNEGGQEQGPCVEG) is disordered. The segment covering 173 to 190 (SSLTSRPAETTLENNEGG) has biased composition (polar residues). Ser231 carries the phosphoserine modification. Residues 243-264 (NEIEKQAQAADKMKEQEDLAKA) are a coiled coil. 4 positions are modified to phosphoserine: Ser270, Ser274, Ser331, and Ser370. Residues 393-417 (TTGYSDRPTARHKPDYEPVENTDEA) are disordered. 6 positions are modified to phosphoserine: Ser428, Ser451, Ser453, Ser455, Ser457, and Ser458.

The protein resides in the cytoplasm. The protein localises to the golgi apparatus membrane. GAP activity stimulated by phosphatidylinositol 4,5-bisphosphate (PIP2). Functionally, GTPase-activating protein (GAP) for ADP ribosylation factor 1 (ARF1). Hydrolysis of ARF1-bound GTP may lead to dissociation of coatomer from Golgi-derived membranes to allow fusion with target membranes. In Pongo abelii (Sumatran orangutan), this protein is ADP-ribosylation factor GTPase-activating protein 3.